The sequence spans 61 residues: Probable tautomerase SERP0934 (61 aa).

The active-site Proton acceptor; via imino nitrogen is the P2.

Belongs to the 4-oxalocrotonate tautomerase family.

The chain is Probable tautomerase SERP0934 from Staphylococcus epidermidis (strain ATCC 35984 / DSM 28319 / BCRC 17069 / CCUG 31568 / BM 3577 / RP62A).